Reading from the N-terminus, the 233-residue chain is 7-cyano-7-deazaguanine synthase (233 aa).

Residue Leu7–Ser17 participates in ATP binding. The Zn(2+) site is built by Cys195, Cys206, Cys209, and Cys212.

The protein belongs to the QueC family. It depends on Zn(2+) as a cofactor.

It carries out the reaction 7-carboxy-7-deazaguanine + NH4(+) + ATP = 7-cyano-7-deazaguanine + ADP + phosphate + H2O + H(+). The protein operates within purine metabolism; 7-cyano-7-deazaguanine biosynthesis. Its function is as follows. Catalyzes the ATP-dependent conversion of 7-carboxy-7-deazaguanine (CDG) to 7-cyano-7-deazaguanine (preQ(0)). In Methanococcus vannielii (strain ATCC 35089 / DSM 1224 / JCM 13029 / OCM 148 / SB), this protein is 7-cyano-7-deazaguanine synthase.